The primary structure comprises 954 residues: Bifunctional glutamine synthetase adenylyltransferase/adenylyl-removing enzyme (954 aa).

Positions 1 to 450 (MENISNKPLS…HFIETVGGRT (450 aa)) are adenylyl removase. Residues 454 to 954 (GADLWTQQLW…MDIYQRILVD (501 aa)) are adenylyl transferase.

Belongs to the GlnE family. It depends on Mg(2+) as a cofactor.

The catalysed reaction is [glutamine synthetase]-O(4)-(5'-adenylyl)-L-tyrosine + phosphate = [glutamine synthetase]-L-tyrosine + ADP. It carries out the reaction [glutamine synthetase]-L-tyrosine + ATP = [glutamine synthetase]-O(4)-(5'-adenylyl)-L-tyrosine + diphosphate. Functionally, involved in the regulation of glutamine synthetase GlnA, a key enzyme in the process to assimilate ammonia. When cellular nitrogen levels are high, the C-terminal adenylyl transferase (AT) inactivates GlnA by covalent transfer of an adenylyl group from ATP to specific tyrosine residue of GlnA, thus reducing its activity. Conversely, when nitrogen levels are low, the N-terminal adenylyl removase (AR) activates GlnA by removing the adenylyl group by phosphorolysis, increasing its activity. The regulatory region of GlnE binds the signal transduction protein PII (GlnB) which indicates the nitrogen status of the cell. The chain is Bifunctional glutamine synthetase adenylyltransferase/adenylyl-removing enzyme from Shewanella woodyi (strain ATCC 51908 / MS32).